A 560-amino-acid chain; its full sequence is Mitochondria-eating protein (560 aa).

An interaction with YWHAG/14-3-3 protein gamma region spans residues 1-294 (MADNLRKLVS…SHSRNHSRSR (294 aa)). Phosphoserine is present on residues S13, S85, S156, and S159. 2 coiled-coil regions span residues 118–186 (DRNI…SRHR) and 223–248 (DYEK…LQGR). Disordered regions lie at residues 178-217 (QAQE…AQRK) and 243-316 (SVLQ…AKLS). A compositionally biased stretch (basic and acidic residues) spans 181 to 209 (EESRHRPPEHRSSEKRGSERRRVEPRGAD). A compositionally biased stretch (low complexity) spans 248–262 (RSTRSRSPSPASCSR). Over residues 263–293 (SRSHSHSRSRSHSHSRSGSHSRSHSRNHSRS) the composition is skewed to basic residues. A compositionally biased stretch (polar residues) spans 300–310 (TAVSGVRSPSP). Residues S307, S309, and S531 each carry the phosphoserine modification.

This sequence belongs to the MIEAP family. In terms of assembly, interacts (via coiled-coil domains) with BNIP3L (via BH3 domain). Interacts (via coiled-coil domains) with BNIP3 (via BH3 domain). Interacts with YWHAG/14-3-3 protein gamma; a protein that also plays a role in MALM.

It is found in the cytoplasm. It localises to the cytosol. The protein localises to the mitochondrion outer membrane. Its subcellular location is the mitochondrion matrix. Functionally, key regulator of mitochondrial quality that mediates the repairing or degradation of unhealthy mitochondria in response to mitochondrial damage. Mediator of mitochondrial protein catabolic process (also named MALM) by mediating the degradation of damaged proteins inside mitochondria by promoting the accumulation in the mitochondrial matrix of hydrolases that are characteristic of the lysosomal lumen. Also involved in mitochondrion degradation of damaged mitochondria by promoting the formation of vacuole-like structures (named MIV), which engulf and degrade unhealthy mitochondria by accumulating lysosomes. The physical interaction of SPATA18/MIEAP, BNIP3 and BNIP3L/NIX at the mitochondrial outer membrane regulates the opening of a pore in the mitochondrial double membrane in order to mediate the translocation of lysosomal proteins from the cytoplasm to the mitochondrial matrix. Binds cardiolipin. May form molecular condensates (non-membrane-bounded organelles) within mitochondria that compartmentalize and promote cardiolipin metabolism. This is Mitochondria-eating protein (SPATA18) from Sus scrofa (Pig).